The primary structure comprises 480 residues: uncharacterized protein (480 aa).

The chain crosses the membrane as a helical span at residues 7–28 (HVISIFETFGAYFINIFYNFLY). Asparagine 73 and asparagine 195 each carry an N-linked (GlcNAc...) asparagine; by host glycan. A coiled-coil region spans residues 195–235 (NRSLLYQIEELTSEKKSLLAELSTLRKKYEKRQSEYRRLVQ). The interval 297 to 332 (ELTSKSPSNYPVPQSRTIVSKPSDNYPVPQSRSSKI) is disordered. Positions 301-329 (KSPSNYPVPQSRTIVSKPSDNYPVPQSRS) are enriched in polar residues. An N-linked (GlcNAc...) asparagine; by host glycan is attached at asparagine 455.

It belongs to the asfivirus B475L family.

The protein localises to the host membrane. This is an uncharacterized protein from African swine fever virus (isolate Pig/Kenya/KEN-50/1950) (ASFV).